Here is a 516-residue protein sequence, read N- to C-terminus: Levanbiose-producing levanase (516 aa).

At 1 to 5 (MNYIK) the chain is on the cytoplasmic side. Residues 6–26 (AGKWLTVFLTFLGILLFIDLF) form a helical membrane-spanning segment. Topologically, residues 27–516 (PKEEHDQKTK…TVKHFDSIHE (490 aa)) are extracellular. Substrate-binding positions include 55 to 58 (WKND), 116 to 117 (WT), 181 to 182 (RD), glutamate 230, and tryptophan 318. The active site involves aspartate 58.

Belongs to the glycosyl hydrolase 32 family.

It localises to the cell membrane. The catalysed reaction is Hydrolysis of (2-&gt;6)-beta-D-fructofuranan, to remove successive disaccharide residues as levanbiose, i.e. 6-(beta-D-fructofuranosyl)-D-fructose, from the end of the chain.. Catalyzes the degradation of levan mainly into levanbiose (difructose). Is not active on sucrose. This Bacillus subtilis (strain 168) protein is Levanbiose-producing levanase (levB).